We begin with the raw amino-acid sequence, 100 residues long: Urease subunit gamma (100 aa).

The protein belongs to the urease gamma subunit family. As to quaternary structure, heterotrimer of UreA (gamma), UreB (beta) and UreC (alpha) subunits. Three heterotrimers associate to form the active enzyme.

It localises to the cytoplasm. The enzyme catalyses urea + 2 H2O + H(+) = hydrogencarbonate + 2 NH4(+). It participates in nitrogen metabolism; urea degradation; CO(2) and NH(3) from urea (urease route): step 1/1. The polypeptide is Urease subunit gamma (Staphylococcus aureus (strain N315)).